We begin with the raw amino-acid sequence, 255 residues long: tRNA (guanine-N(7)-)-methyltransferase (255 aa).

The segment at 1 to 35 is disordered; that stretch reads MTRTNDASGGGKLPRKRFYRARAHSNPLSDSHFPV. Residues 13–23 are compositionally biased toward basic residues; that stretch reads LPRKRFYRARA. Residues Gly75, 98–99, 131–132, and Leu151 contribute to the S-adenosyl-L-methionine site; these read EL and NS. Asp154 is a catalytic residue. 229 to 231 serves as a coordination point for S-adenosyl-L-methionine; it reads TEE.

It belongs to the class I-like SAM-binding methyltransferase superfamily. TrmB family.

The protein localises to the nucleus. The catalysed reaction is guanosine(46) in tRNA + S-adenosyl-L-methionine = N(7)-methylguanosine(46) in tRNA + S-adenosyl-L-homocysteine. It participates in tRNA modification; N(7)-methylguanine-tRNA biosynthesis. In terms of biological role, catalyzes the formation of N(7)-methylguanine at position 46 (m7G46) in tRNA. The sequence is that of tRNA (guanine-N(7)-)-methyltransferase from Zea mays (Maize).